The sequence spans 193 residues: Bcl-2-like protein 2 (193 aa).

Alanine 2 bears the N-acetylalanine mark. Positions 9-29 (DTRALVADFVGYKLRQKGYVC) match the BH4 motif. Residues 85–104 (ELFQGGPNWGRLVAFFVFGA) carry the BH1 motif. The BH2 motif lies at 136-151 (DWIHSSGGWAEFTALY).

This sequence belongs to the Bcl-2 family. As to quaternary structure, interacts with HIF3A (via C-terminus domain). Interacts with BOP.

The protein localises to the mitochondrion membrane. Its function is as follows. Promotes cell survival. Blocks dexamethasone-induced apoptosis. Mediates survival of postmitotic Sertoli cells by suppressing death-promoting activity of BAX. The sequence is that of Bcl-2-like protein 2 (BCL2L2) from Bos taurus (Bovine).